Here is a 584-residue protein sequence, read N- to C-terminus: Long-chain-fatty-acid--AMP ligase FadD23 (584 aa).

Transmembrane regions (helical) follow at residues 199–219 (YFAD…WLPF) and 225–245 (LVLG…TSPV).

It belongs to the ATP-dependent AMP-binding enzyme family.

The protein localises to the membrane. It carries out the reaction holo-[(hydroxy)phthioceranic acid synthase] + hexadecanoate + ATP = hexadecanoyl-[(hydroxy)phthioceranic acid synthase] + AMP + diphosphate. The catalysed reaction is holo-[(hydroxy)phthioceranic acid synthase] + octadecanoate + ATP = octadecanoyl-[(hydroxy)phthioceranic acid synthase] + AMP + diphosphate. It participates in lipid metabolism; fatty acid biosynthesis. In terms of biological role, catalyzes the activation of long-chain fatty acids as acyl-adenylates (acyl-AMP), which are then transferred to the multifunctional polyketide synthase (PKS) type III for further chain extension. Involved in the biosynthesis of sulfolipid 1 (SL-1). This is Long-chain-fatty-acid--AMP ligase FadD23 (fadD23) from Mycobacterium bovis (strain ATCC BAA-935 / AF2122/97).